The sequence spans 89 residues: Large ribosomal subunit protein bL27 (89 aa).

The tract at residues methionine 1–leucine 21 is disordered.

It belongs to the bacterial ribosomal protein bL27 family.

This chain is Large ribosomal subunit protein bL27, found in Roseobacter denitrificans (strain ATCC 33942 / OCh 114) (Erythrobacter sp. (strain OCh 114)).